A 361-amino-acid polypeptide reads, in one-letter code: Serine/threonine-protein kinase SRK2I (361 aa).

The 257-residue stretch at 22–278 (YDFVKDIGSG…IPEIKTHSWF (257 aa)) folds into the Protein kinase domain. ATP contacts are provided by residues 28–36 (IGSGNFGVA) and lysine 51. Aspartate 141 (proton acceptor) is an active-site residue.

The protein belongs to the protein kinase superfamily. Ser/Thr protein kinase family. Interacts with ABI1. Interacts with I-2 and TOPP1. Interacts with FREE1 (via C-terminus). Post-translationally, autophosphorylated in vitro. As to expression, expressed at low levels in seeds, seedlings, roots (especially in tips), stems, leaves, shoots, flowers and siliques.

It carries out the reaction L-seryl-[protein] + ATP = O-phospho-L-seryl-[protein] + ADP + H(+). The enzyme catalyses L-threonyl-[protein] + ATP = O-phospho-L-threonyl-[protein] + ADP + H(+). Activated by autophosphorylation of its activation loop. Its function is as follows. Together with SRK2D, key component and activator of the abscisic acid (ABA) signaling pathway that regulates numerous ABA responses, such as seed germination, Pro accumulation, root growth inhibition, dormancy and seedling growth, and, to a lesser extent, stomatal closure. In response to ABA, phosphorylates the ESCRT-I complex component FREE1, which is required for ABA-induced FREE1 nuclear import. This Arabidopsis thaliana (Mouse-ear cress) protein is Serine/threonine-protein kinase SRK2I (SRK2I).